We begin with the raw amino-acid sequence, 150 residues long: Large ribosomal subunit protein bL9 (150 aa).

It belongs to the bacterial ribosomal protein bL9 family.

Binds to the 23S rRNA. This is Large ribosomal subunit protein bL9 from Saccharopolyspora erythraea (strain ATCC 11635 / DSM 40517 / JCM 4748 / NBRC 13426 / NCIMB 8594 / NRRL 2338).